Here is a 276-residue protein sequence, read N- to C-terminus: MQNDPIGLMDSGVGGLTVLKEVQRLLPTENTVFLGDQARLPYGPRSVAEVTMFTKQIAQFLRQQARIKALVIACNTATAAALTTMQQTLPIPVIGVIAPGAQAAVQTTRNHRIGVIATAGTVKSDQYRRDILAAAPNSQIFSVACPEMVTLAEQNDLTTTHAQSVVAANLASLMDKKIDTLVMGCTHFPLLRSAIQHAVGSQVTLVDPGLATAEQTVAILKTRGLLNSATTRGTAQFFTTGETDQFDTLASQWLDQQPTPAKHVAIAQLTTPMEVN.

Residues 10-11 and 42-43 contribute to the substrate site; these read DS and YG. The Proton donor/acceptor role is filled by C74. Residue 75 to 76 participates in substrate binding; the sequence is NT. Residue C185 is the Proton donor/acceptor of the active site. Substrate is bound at residue 186-187; sequence TH.

The protein belongs to the aspartate/glutamate racemases family.

The enzyme catalyses L-glutamate = D-glutamate. It functions in the pathway cell wall biogenesis; peptidoglycan biosynthesis. Functionally, provides the (R)-glutamate required for cell wall biosynthesis. The protein is Glutamate racemase of Levilactobacillus brevis (Lactobacillus brevis).